Here is a 295-residue protein sequence, read N- to C-terminus: Excinuclease cho (295 aa).

The GIY-YIG domain occupies 33–108 (TRPGVYLFHG…IKEQQPLFNK (76 aa)).

Functionally, incises the DNA at the 3' side of a lesion during nucleotide excision repair. Incises the DNA farther away from the lesion than UvrC. Not able to incise the 5' site of a lesion. When a lesion remains because UvrC is not able to induce the 3' incision, Cho incises the DNA. Then UvrC makes the 5' incision. The combined action of Cho and UvrC broadens the substrate range of nucleotide excision repair. In Escherichia coli O6:H1 (strain CFT073 / ATCC 700928 / UPEC), this protein is Excinuclease cho (cho).